We begin with the raw amino-acid sequence, 193 residues long: Epididymal-specific lipocalin-12 (193 aa).

The N-terminal stretch at 1–19 (MGPWWALWLILTLPQILGG) is a signal peptide. The cysteines at positions 88 and 193 are disulfide-linked. N-linked (GlcNAc...) asparagine glycans are attached at residues N143 and N172.

Belongs to the calycin superfamily. Lipocalin family. Monomer.

The protein resides in the secreted. Its function is as follows. Binds all-trans retinoic acid and may act as a retinoid carrier protein within the epididymis. May play a role in male fertility. The chain is Epididymal-specific lipocalin-12 (Lcn12) from Rattus norvegicus (Rat).